Here is a 108-residue protein sequence, read N- to C-terminus: Nucleoid-associated protein HEAR1046 (108 aa).

The tract at residues 86 to 108 (TSQEKMAGATAGMPMPPGFKMPF) is disordered. Residues 99 to 108 (PMPPGFKMPF) show a composition bias toward pro residues.

The protein belongs to the YbaB/EbfC family. Homodimer.

It is found in the cytoplasm. The protein localises to the nucleoid. Functionally, binds to DNA and alters its conformation. May be involved in regulation of gene expression, nucleoid organization and DNA protection. The chain is Nucleoid-associated protein HEAR1046 from Herminiimonas arsenicoxydans.